The primary structure comprises 147 residues: D-aminoacyl-tRNA deacylase (147 aa).

The Gly-cisPro motif, important for rejection of L-amino acids motif lies at 136–137 (GP).

This sequence belongs to the DTD family. As to quaternary structure, homodimer.

Its subcellular location is the cytoplasm. The catalysed reaction is glycyl-tRNA(Ala) + H2O = tRNA(Ala) + glycine + H(+). It catalyses the reaction a D-aminoacyl-tRNA + H2O = a tRNA + a D-alpha-amino acid + H(+). Functionally, an aminoacyl-tRNA editing enzyme that deacylates mischarged D-aminoacyl-tRNAs. Also deacylates mischarged glycyl-tRNA(Ala), protecting cells against glycine mischarging by AlaRS. Acts via tRNA-based rather than protein-based catalysis; rejects L-amino acids rather than detecting D-amino acids in the active site. By recycling D-aminoacyl-tRNA to D-amino acids and free tRNA molecules, this enzyme counteracts the toxicity associated with the formation of D-aminoacyl-tRNA entities in vivo and helps enforce protein L-homochirality. This Streptococcus agalactiae serotype Ia (strain ATCC 27591 / A909 / CDC SS700) protein is D-aminoacyl-tRNA deacylase.